The sequence spans 259 residues: Isoprenyl transferase (259 aa).

Aspartate 33 is a catalytic residue. Position 33 (aspartate 33) interacts with Mg(2+). Residues 34–37 (GNRR), tryptophan 38, histidine 51, and 79–81 (STE) contribute to the substrate site. Asparagine 82 serves as the catalytic Proton acceptor. Residues arginine 86, arginine 208, and 214-216 (RMS) each bind substrate. Glutamate 227 is a binding site for Mg(2+).

It belongs to the UPP synthase family. As to quaternary structure, homodimer. Requires Mg(2+) as cofactor.

Functionally, catalyzes the condensation of isopentenyl diphosphate (IPP) with allylic pyrophosphates generating different type of terpenoids. The chain is Isoprenyl transferase from Streptomyces fradiae (Streptomyces roseoflavus).